Reading from the N-terminus, the 315-residue chain is MPSYRPPKIASSEITPRQVYLRRREFLGAATLGAMALYGAGKASAAAFSAVESKYKVDEKTTPIKDVTTYNNFYEFGLDKGDPAALSGEFKPLPWAVKVDGMVNKPGTFDVEALIKEFPIEERTYRMRCVEAWSMVIPWNGFPLAALLNKVEPLGSAKYVAFETVVRPEEMPGQKGFFQSLDWPYVEGLRLDEARHPLTLLAVGLYGETLPNQNGAPIRLVVPWKYGFKGIKSIVRITLTDQQPKNTWQVTNPQEYGFYANVNPAVDHPRWSQASERRIGGSGFFGASRRPTLPFNGYADEVASLYAGMDLKANF.

Residues 1–45 (MPSYRPPKIASSEITPRQVYLRRREFLGAATLGAMALYGAGKASA) constitute a signal peptide (tat-type signal). Mo-molybdopterin-binding positions include Asn71, 74–75 (YE), Cys129, Thr164, Asn214, Arg219, and 230–232 (GIK).

It belongs to the MsrP family. As to quaternary structure, heterodimer of a catalytic subunit (MsrP) and a heme-binding subunit (MsrQ). The cofactor is Mo-molybdopterin. Predicted to be exported by the Tat system. The position of the signal peptide cleavage has not been experimentally proven.

The protein resides in the periplasm. The catalysed reaction is L-methionyl-[protein] + a quinone + H2O = L-methionyl-(S)-S-oxide-[protein] + a quinol. It carries out the reaction L-methionyl-[protein] + a quinone + H2O = L-methionyl-(R)-S-oxide-[protein] + a quinol. Functionally, part of the MsrPQ system that repairs oxidized periplasmic proteins containing methionine sulfoxide residues (Met-O), using respiratory chain electrons. Thus protects these proteins from oxidative-stress damage caused by reactive species of oxygen and chlorine generated by the host defense mechanisms. MsrPQ is essential for the maintenance of envelope integrity under bleach stress, rescuing a wide series of structurally unrelated periplasmic proteins from methionine oxidation. The catalytic subunit MsrP is non-stereospecific, being able to reduce both (R-) and (S-) diastereoisomers of methionine sulfoxide. The sequence is that of Protein-methionine-sulfoxide reductase catalytic subunit MsrP from Rhizobium etli (strain ATCC 51251 / DSM 11541 / JCM 21823 / NBRC 15573 / CFN 42).